A 475-amino-acid polypeptide reads, in one-letter code: ISWI one complex protein 4 (475 aa).

S2 bears the Phosphoserine mark. Position 9 is a phosphothreonine (T9). 3 disordered regions span residues V42–E84, E181–H296, and E454–A475. A phosphoserine mark is found at S65 and S73. 3 stretches are compositionally biased toward acidic residues: residues Q72–E84, E181–E193, and A241–K252. Phosphoserine is present on S242. A compositionally biased stretch (basic residues) spans K259–K294. Over residues D456–A475 the composition is skewed to basic and acidic residues.

Component of the ISW1B complex, which at least consists of ISW1, IOC2 and IOC4.

Its subcellular location is the nucleus. In terms of biological role, functions as a component of the ISW1B complex, which acts in remodeling the chromatin by catalyzing an ATP-dependent alteration in the structure of nucleosomal DNA. The ISW1B complex acts within coding regions to control the amount of RNA polymerase II released into productive elongation and to coordinate elongation with termination and pre-mRNA processing. In Saccharomyces cerevisiae (strain ATCC 204508 / S288c) (Baker's yeast), this protein is ISWI one complex protein 4 (IOC4).